The primary structure comprises 318 residues: MPMQGAQRKLLGSLNSTPTATSNLGLAANRTGAPCLELPIPNGLFLSLGLVSLVENVLVVAAIAKNRNLHSSMYCFICCLALSDLLVSGSNMLETAVILLLEAGVLATRASVVQQLHNTIDVLTCSSMLCSLCFLGAIAVDRYISIFYALRYHSIMTLPRAQRAVAAIWVASVLSSTLFITYYDHAAVLLCLMVFFLAMLVLMAVLYVHMLARARQHAQGIIRLHKRQPPAHKGFGLRGAATLTILLGIFFLCWGPFFLCLTLVVFCPQHLTCNCIFKNFKVFLTLIICNTIIDPLIYAFRSQELRRMLKEVLGRGRW.

The Extracellular portion of the chain corresponds to 1-37 (MPMQGAQRKLLGSLNSTPTATSNLGLAANRTGAPCLE). A glycan (N-linked (GlcNAc...) asparagine) is linked at asparagine 29. A helical transmembrane segment spans residues 38–63 (LPIPNGLFLSLGLVSLVENVLVVAAI). Over 64 to 72 (AKNRNLHSS) the chain is Cytoplasmic. The chain crosses the membrane as a helical span at residues 73 to 93 (MYCFICCLALSDLLVSGSNML). The Extracellular segment spans residues 94–118 (ETAVILLLEAGVLATRASVVQQLHN). A helical membrane pass occupies residues 119–140 (TIDVLTCSSMLCSLCFLGAIAV). Residues 141–163 (DRYISIFYALRYHSIMTLPRAQR) are Cytoplasmic-facing. A helical membrane pass occupies residues 164–183 (AVAAIWVASVLSSTLFITYY). The Extracellular segment spans residues 184–191 (DHAAVLLC). The helical transmembrane segment at 192–211 (LMVFFLAMLVLMAVLYVHML) threads the bilayer. The Cytoplasmic segment spans residues 212 to 240 (ARARQHAQGIIRLHKRQPPAHKGFGLRGA). Residues 241-266 (ATLTILLGIFFLCWGPFFLCLTLVVF) traverse the membrane as a helical segment. The Extracellular portion of the chain corresponds to 267-279 (CPQHLTCNCIFKN). The chain crosses the membrane as a helical span at residues 280–300 (FKVFLTLIICNTIIDPLIYAF). Topologically, residues 301–317 (RSQELRRMLKEVLGRGR) are cytoplasmic.

Belongs to the G-protein coupled receptor 1 family. As to quaternary structure, interacts with MGRN1, but does not undergo MGRN1-mediated ubiquitination; this interaction competes with GNAS-binding and thus inhibits agonist-induced cAMP production. Interacts with OPN3; the interaction results in a decrease in MC1R-mediated cAMP signaling and ultimately a decrease in melanin production in melanocytes.

The protein resides in the cell membrane. Functionally, receptor for MSH (alpha, beta and gamma) and ACTH. The activity of this receptor is mediated by G proteins which activate adenylate cyclase. Mediates melanogenesis, the production of eumelanin (black/brown) and phaeomelanin (red/yellow), via regulation of cAMP signaling in melanocytes. This is Melanocyte-stimulating hormone receptor (MC1R) from Leontopithecus rosalia (Golden lion tamarin).